The chain runs to 231 residues: Lipoprotein-releasing system ATP-binding protein LolD (231 aa).

An ABC transporter domain is found at 6 to 231 (LKCQSVHKVY…VLAKVAPNSL (226 aa)). 42–49 (GASGSGKS) is a binding site for ATP.

Belongs to the ABC transporter superfamily. Lipoprotein translocase (TC 3.A.1.125) family. As to quaternary structure, the complex is composed of two ATP-binding proteins (LolD) and two transmembrane proteins (LolC and LolE).

The protein localises to the cell inner membrane. Part of the ABC transporter complex LolCDE involved in the translocation of mature outer membrane-directed lipoproteins, from the inner membrane to the periplasmic chaperone, LolA. Responsible for the formation of the LolA-lipoprotein complex in an ATP-dependent manner. This is Lipoprotein-releasing system ATP-binding protein LolD from Hahella chejuensis (strain KCTC 2396).